The chain runs to 112 residues: uncharacterized protein (112 aa).

Over residues 1–11 (MAESVASSESL) the composition is skewed to polar residues. The disordered stretch occupies residues 1–32 (MAESVASSESLPQMKPEEPESKKSPSREAIPK). Basic and acidic residues predominate over residues 15–31 (KPEEPESKKSPSREAIP). Residues 81–101 (VVFIFMIAIMSMLVIGLVVCG) form a helical membrane-spanning segment.

The protein resides in the membrane. This is an uncharacterized protein from Encephalitozoon cuniculi (strain GB-M1) (Microsporidian parasite).